The following is a 1065-amino-acid chain: Carbamoyl phosphate synthase large chain (1065 aa).

Positions 1 to 401 are carboxyphosphate synthetic domain; that stretch reads MPKRTDIETI…AMLKAVRSLE (401 aa). 12 residues coordinate ATP: arginine 129, arginine 169, glycine 175, glycine 176, lysine 208, isoleucine 210, glutamate 215, glycine 241, isoleucine 242, histidine 243, glutamine 284, and glutamate 298. One can recognise an ATP-grasp 1 domain in the interval 133-327; that stretch reads RNLMYELGAP…IAKLAAKIAV (195 aa). Mg(2+) contacts are provided by glutamine 284, glutamate 298, and asparagine 300. Positions 284, 298, and 300 each coordinate Mn(2+). An oligomerization domain region spans residues 402-546; that stretch reads TGQVHLELKH…YGTYEEENES (145 aa). Residues 547–929 are carbamoyl phosphate synthetic domain; the sequence is IKSEKPSVVV…ALYKGLVAAG (383 aa). Residues 671 to 861 form the ATP-grasp 2 domain; sequence EQALRDLNIP…MANIATKAIL (191 aa). Arginine 707, arginine 746, leucine 748, glutamate 752, glycine 777, valine 778, histidine 779, serine 780, glutamine 820, and glutamate 832 together coordinate ATP. Mg(2+) contacts are provided by glutamine 820, glutamate 832, and asparagine 834. The Mn(2+) site is built by glutamine 820, glutamate 832, and asparagine 834. Residues 930-1065 enclose the MGS-like domain; it reads MEIRTEGTVL…EEMPKAEVVH (136 aa). The segment at 930–1065 is allosteric domain; that stretch reads MEIRTEGTVL…EEMPKAEVVH (136 aa).

This sequence belongs to the CarB family. As to quaternary structure, composed of two chains; the small (or glutamine) chain promotes the hydrolysis of glutamine to ammonia, which is used by the large (or ammonia) chain to synthesize carbamoyl phosphate. Tetramer of heterodimers (alpha,beta)4. It depends on Mg(2+) as a cofactor. Mn(2+) is required as a cofactor.

It catalyses the reaction hydrogencarbonate + L-glutamine + 2 ATP + H2O = carbamoyl phosphate + L-glutamate + 2 ADP + phosphate + 2 H(+). The enzyme catalyses hydrogencarbonate + NH4(+) + 2 ATP = carbamoyl phosphate + 2 ADP + phosphate + 2 H(+). Its pathway is amino-acid biosynthesis; L-arginine biosynthesis; carbamoyl phosphate from bicarbonate: step 1/1. The protein operates within pyrimidine metabolism; UMP biosynthesis via de novo pathway; (S)-dihydroorotate from bicarbonate: step 1/3. Its function is as follows. Large subunit of the glutamine-dependent carbamoyl phosphate synthetase (CPSase). CPSase catalyzes the formation of carbamoyl phosphate from the ammonia moiety of glutamine, carbonate, and phosphate donated by ATP, constituting the first step of 2 biosynthetic pathways, one leading to arginine and/or urea and the other to pyrimidine nucleotides. The large subunit (synthetase) binds the substrates ammonia (free or transferred from glutamine from the small subunit), hydrogencarbonate and ATP and carries out an ATP-coupled ligase reaction, activating hydrogencarbonate by forming carboxy phosphate which reacts with ammonia to form carbamoyl phosphate. In Lysinibacillus sphaericus (strain C3-41), this protein is Carbamoyl phosphate synthase large chain.